The chain runs to 199 residues: Octanoyltransferase (199 aa).

The 173-residue stretch at Ser-27–Lys-199 folds into the BPL/LPL catalytic domain. Substrate is bound by residues Arg-66 to His-73, Ser-133 to Gly-135, and Gly-146 to Ala-148. Catalysis depends on Cys-164, which acts as the Acyl-thioester intermediate.

The protein belongs to the LipB family.

The protein resides in the cytoplasm. The enzyme catalyses octanoyl-[ACP] + L-lysyl-[protein] = N(6)-octanoyl-L-lysyl-[protein] + holo-[ACP] + H(+). It participates in protein modification; protein lipoylation via endogenous pathway; protein N(6)-(lipoyl)lysine from octanoyl-[acyl-carrier-protein]: step 1/2. Catalyzes the transfer of endogenously produced octanoic acid from octanoyl-acyl-carrier-protein onto the lipoyl domains of lipoate-dependent enzymes. Lipoyl-ACP can also act as a substrate although octanoyl-ACP is likely to be the physiological substrate. The chain is Octanoyltransferase from Legionella pneumophila (strain Corby).